Here is a 330-residue protein sequence, read N- to C-terminus: Transcription factor TGA2 (330 aa).

A disordered region spans residues 1–48; sequence MADTSPRTDVSTDDDTDHPDLGSEGALVNTAASDSSDRSKGKMDQKTL. A compositionally biased stretch (basic and acidic residues) spans 35 to 47; sequence SSDRSKGKMDQKT. The 64-residue stretch at 44–107 folds into the bZIP domain; sequence DQKTLRRLAQ…GTGDQAHSTG (64 aa). 2 coiled-coil regions span residues 45–142 and 217–244; these read QKTL…HAGD and INNLQQTSQQAEDALSQGMESLQQSLAD. The basic motif stretch occupies residues 46 to 66; it reads KTLRRLAQNREAARKSRLRKK. The segment at 72-86 is leucine-zipper; that stretch reads LENSRLKLTQLEQEL. A DOG1 domain is found at 111–327; that stretch reads ALAFDAEHSR…RALSSLWLAR (217 aa).

The protein belongs to the bZIP family. In terms of assembly, binds DNA as a dimer. Interacts with NPR1, NPR3 and NPR4. Interacts with GRXC7/ROXY1 and GRXC9/GRX480. As to expression, expressed in the whole plant.

Its subcellular location is the nucleus. Its function is as follows. Transcriptional activator that binds specifically to the DNA sequence 5'-TGACG-3'. Recognizes ocs elements like the as-1 motif of the cauliflower mosaic virus 35S promoter. Binding to the as-1-like cis elements mediate auxin- and salicylic acid-inducible transcription. Required to induce the systemic acquired resistance (SAR) via the regulation of pathogenesis-related genes expression. Binding to the as-1 element of PR-1 promoter is salicylic acid-inducible and mediated by NPR1. Could also bind to the C-boxes (5'-ATGACGTCAT-3') with high affinity. This chain is Transcription factor TGA2 (TGA2), found in Arabidopsis thaliana (Mouse-ear cress).